Reading from the N-terminus, the 343-residue chain is Multidrug resistance protein MdtN (343 aa).

Topologically, residues 1–12 (MESTPKKAPRSK) are cytoplasmic. A helical; Signal-anchor for type II membrane protein membrane pass occupies residues 13-33 (FPALLVVALALVALVFVIWRV). Residues 34–343 (DSAPSTNDAY…ASAVANLEPQ (310 aa)) lie on the Periplasmic side of the membrane.

This sequence belongs to the membrane fusion protein (MFP) (TC 8.A.1) family. In terms of assembly, could be part of a tripartite efflux system composed of MdtN, MdtO and MdtP.

The protein localises to the cell inner membrane. Its function is as follows. Could be involved in resistance to puromycin, acriflavine and tetraphenylarsonium chloride. This chain is Multidrug resistance protein MdtN (mdtN), found in Escherichia coli O157:H7.